Consider the following 267-residue polypeptide: MNEQYQHRARKRFGQNFLHDAGIIDRILRAINAKAGEHLLEIGPGQGALTEGLLGSGAQLDVVELDKDLVPILQHKFADRSNFRLHQGDALKFDFNQLGVPPRSLKVVGNLPYNISTPLIFHLLSHAGLIRDMHFMLQKEVVERMAAGPGGGDWGRLSIMVQYHCRVEHLFNVGPGAFNPPPKVDSAIVRLVPHEVLPFPAKDHLLLERVVREAFNQRRKTLRNTMKGLLDSAAIEAAGVDGSLRPEQLDLAAFVRLADQLADQQQA.

S-adenosyl-L-methionine-binding residues include Asn-16, Leu-18, Gly-43, Glu-64, Asp-89, and Asn-110.

Belongs to the class I-like SAM-binding methyltransferase superfamily. rRNA adenine N(6)-methyltransferase family. RsmA subfamily.

Its subcellular location is the cytoplasm. It carries out the reaction adenosine(1518)/adenosine(1519) in 16S rRNA + 4 S-adenosyl-L-methionine = N(6)-dimethyladenosine(1518)/N(6)-dimethyladenosine(1519) in 16S rRNA + 4 S-adenosyl-L-homocysteine + 4 H(+). In terms of biological role, specifically dimethylates two adjacent adenosines (A1518 and A1519) in the loop of a conserved hairpin near the 3'-end of 16S rRNA in the 30S particle. May play a critical role in biogenesis of 30S subunits. The protein is Ribosomal RNA small subunit methyltransferase A of Pseudomonas putida (strain ATCC 47054 / DSM 6125 / CFBP 8728 / NCIMB 11950 / KT2440).